The sequence spans 119 residues: Ribonuclease P protein component (119 aa).

This sequence belongs to the RnpA family. As to quaternary structure, consists of a catalytic RNA component (M1 or rnpB) and a protein subunit.

The catalysed reaction is Endonucleolytic cleavage of RNA, removing 5'-extranucleotides from tRNA precursor.. RNaseP catalyzes the removal of the 5'-leader sequence from pre-tRNA to produce the mature 5'-terminus. It can also cleave other RNA substrates such as 4.5S RNA. The protein component plays an auxiliary but essential role in vivo by binding to the 5'-leader sequence and broadening the substrate specificity of the ribozyme. In Corynebacterium diphtheriae (strain ATCC 700971 / NCTC 13129 / Biotype gravis), this protein is Ribonuclease P protein component.